Consider the following 114-residue polypeptide: Notch-regulated ankyrin repeat-containing protein (114 aa).

ANK repeat units follow at residues Glu-50–Leu-79 and Asp-83–Ser-112.

Belongs to the NRARP family. As to quaternary structure, forms a ternary complex with the intracellular domain (ICD) of notch1 and rbpj/suh.

Its function is as follows. Promotes loss of intracellular domain (ICD) of Notch1 in embryos. By down-regulating ICD levels, could function as a negative feedback regulator of Notch signaling that attenuates ICD-mediated transcription. Involved in angiogenesis. May be involved in somitogenesis. The polypeptide is Notch-regulated ankyrin repeat-containing protein (nrarp) (Xenopus laevis (African clawed frog)).